A 118-amino-acid polypeptide reads, in one-letter code: UPF0102 protein Csac_2148 (118 aa).

Belongs to the UPF0102 family.

This Caldicellulosiruptor saccharolyticus (strain ATCC 43494 / DSM 8903 / Tp8T 6331) protein is UPF0102 protein Csac_2148.